The sequence spans 279 residues: MEINQAAEKEQEYVHKVYNEIAPHFSQTRYKPWPIVTQFLKTRPMGSIGIDVGCGNGKYLGVNPDIYIIGSDRSDGLIECARGINPSYNLLVADGLNLPHKNETFDFAISIAVVHHWSTRERRVEVIRHVLSKLRQGGQALIYCWALEQGSSRRGYHEGMEQDVFVPWVLPKSKSKPKTKSTPPAKVKTRPKPNLMNIPPKERSEYLQRWKEEQQRSKSLDDNDEKQQQDQEQEREEVKYRYYHLYREGELAEDCRQAGAAVHSEGFERDNWWVVAQKR.

The segment at 172–236 (KSKSKPKTKS…QQQDQEQERE (65 aa)) is disordered. Positions 200 to 229 (PKERSEYLQRWKEEQQRSKSLDDNDEKQQQ) are enriched in basic and acidic residues.

Interacts with TRM112.

It is found in the cytoplasm. It localises to the nucleus. It carries out the reaction 5-(carboxymethyl)uridine(34) in tRNA + S-adenosyl-L-methionine = 5-(2-methoxy-2-oxoethyl)uridine(34) in tRNA + S-adenosyl-L-homocysteine. Required for the methylation of the wobble bases at position 34 in tRNA. Appears to have a role in stress-response. This is tRNA (carboxymethyluridine(34)-5-O)-methyltransferase (TRM9) from Saccharomyces cerevisiae (strain ATCC 204508 / S288c) (Baker's yeast).